A 259-amino-acid polypeptide reads, in one-letter code: Small ribosomal subunit protein uS2 (259 aa).

It belongs to the universal ribosomal protein uS2 family.

This chain is Small ribosomal subunit protein uS2, found in Streptococcus pneumoniae (strain Hungary19A-6).